The sequence spans 341 residues: D-erythrose-4-phosphate dehydrogenase (341 aa).

11-12 (RI) contributes to the NAD(+) binding site. Substrate is bound by residues 158–160 (SCT), R204, 217–218 (TK), and R240. Residue C159 is the Nucleophile of the active site. N322 contributes to the NAD(+) binding site.

It belongs to the glyceraldehyde-3-phosphate dehydrogenase family. Epd subfamily. In terms of assembly, homotetramer.

The protein localises to the cytoplasm. It catalyses the reaction D-erythrose 4-phosphate + NAD(+) + H2O = 4-phospho-D-erythronate + NADH + 2 H(+). It participates in cofactor biosynthesis; pyridoxine 5'-phosphate biosynthesis; pyridoxine 5'-phosphate from D-erythrose 4-phosphate: step 1/5. Catalyzes the NAD-dependent conversion of D-erythrose 4-phosphate to 4-phosphoerythronate. The polypeptide is D-erythrose-4-phosphate dehydrogenase (Vibrio cholerae serotype O1 (strain ATCC 39541 / Classical Ogawa 395 / O395)).